Reading from the N-terminus, the 171-residue chain is Laminin subunit beta-1 (171 aa).

A signal peptide spans 1–29 (MNGRTQNLWFSTFRLVIVYALFFAKLCFG). 5 disulfide bridges follow: C59/C69, C72/C81, C84/C100, C103/C118, and C105/C128. Laminin EGF-like domains follow at residues 66–102 (TGVC…VCQR), 103–160 (CQCP…TCKK), and 161–171 (CLCNGNINSAS). The N-linked (GlcNAc...) asparagine glycan is linked to N130. 2 disulfides stabilise this stretch: C131/C140 and C143/C158.

In terms of assembly, laminin is a complex glycoprotein, consisting of three different polypeptide chains (alpha, beta, gamma), which are bound to each other by disulfide bonds into a cross-shaped molecule comprising one long and three short arms with globules at each end.

The protein localises to the secreted. Its subcellular location is the extracellular space. The protein resides in the extracellular matrix. It localises to the basement membrane. Its function is as follows. Binding to cells via a high affinity receptor, laminin is thought to mediate the attachment, migration and organization of cells into tissues during embryonic development by interacting with other extracellular matrix components. The sequence is that of Laminin subunit beta-1 from Hydra vulgaris (Hydra).